Here is a 390-residue protein sequence, read N- to C-terminus: Chorismate synthase 2 (390 aa).

The NADP(+) site is built by arginine 39 and arginine 45. Residues 132 to 134 (RSS), 253 to 254 (NA), glycine 298, 313 to 317 (KPIPT), and arginine 339 contribute to the FMN site.

Belongs to the chorismate synthase family. Homotetramer. FMNH2 serves as cofactor.

It catalyses the reaction 5-O-(1-carboxyvinyl)-3-phosphoshikimate = chorismate + phosphate. It participates in metabolic intermediate biosynthesis; chorismate biosynthesis; chorismate from D-erythrose 4-phosphate and phosphoenolpyruvate: step 7/7. Catalyzes the anti-1,4-elimination of the C-3 phosphate and the C-6 proR hydrogen from 5-enolpyruvylshikimate-3-phosphate (EPSP) to yield chorismate, which is the branch point compound that serves as the starting substrate for the three terminal pathways of aromatic amino acid biosynthesis. This reaction introduces a second double bond into the aromatic ring system. This Bacillus thuringiensis (strain Al Hakam) protein is Chorismate synthase 2.